A 187-amino-acid chain; its full sequence is Peptidyl-tRNA hydrolase (187 aa).

Tyrosine 14 is a tRNA binding site. Histidine 19 acts as the Proton acceptor in catalysis. Residues tyrosine 64, asparagine 66, and asparagine 112 each contribute to the tRNA site.

It belongs to the PTH family. In terms of assembly, monomer.

The protein resides in the cytoplasm. The catalysed reaction is an N-acyl-L-alpha-aminoacyl-tRNA + H2O = an N-acyl-L-amino acid + a tRNA + H(+). In terms of biological role, hydrolyzes ribosome-free peptidyl-tRNAs (with 1 or more amino acids incorporated), which drop off the ribosome during protein synthesis, or as a result of ribosome stalling. Catalyzes the release of premature peptidyl moieties from peptidyl-tRNA molecules trapped in stalled 50S ribosomal subunits, and thus maintains levels of free tRNAs and 50S ribosomes. This Clostridium acetobutylicum (strain ATCC 824 / DSM 792 / JCM 1419 / IAM 19013 / LMG 5710 / NBRC 13948 / NRRL B-527 / VKM B-1787 / 2291 / W) protein is Peptidyl-tRNA hydrolase.